The following is a 417-amino-acid chain: MAEIRNFTLNFGPQHPAAHGVLRLVLEMDGEIIQRADPHVGLLHRATEKLAESKPFNQSIGYMDRLDYVSMMCNEHGYVKAIETLLGIEPPLRAQYIRTMFDEITRILNHLMWLGAHGLDIGAMTVFLYCFREREDLMDCYEAVSGARMHATYYRPGGVYRDLPETMPGYQPSKWHNEKEVAIINRNREGSLLDFIEDFTARFPTCVDEYETLLTDNRIWKQRTVGIGVVTPERALQLGFTGPMLRGSGVEWDLRKKQPYAAYDQIDFDIPVGVNGDCYDRYLVRIEEMRQSNQIIKQCVDWLRKNPGPVIVNNYKVAAPPREKMKNDMEVLIHHFKLFTEGYCVPEGEAYAAVEAPKGEFGVYLISDGANKPYRLKVRAPGFAHLAAMDEMVQGHMLADVVAIIGTMDIVFGEIDR.

It belongs to the complex I 49 kDa subunit family. As to quaternary structure, NDH-1 is composed of 14 different subunits. Subunits NuoB, C, D, E, F, and G constitute the peripheral sector of the complex.

Its subcellular location is the cell inner membrane. It carries out the reaction a quinone + NADH + 5 H(+)(in) = a quinol + NAD(+) + 4 H(+)(out). NDH-1 shuttles electrons from NADH, via FMN and iron-sulfur (Fe-S) centers, to quinones in the respiratory chain. The immediate electron acceptor for the enzyme in this species is believed to be ubiquinone. Couples the redox reaction to proton translocation (for every two electrons transferred, four hydrogen ions are translocated across the cytoplasmic membrane), and thus conserves the redox energy in a proton gradient. In Nitrosococcus oceani (strain ATCC 19707 / BCRC 17464 / JCM 30415 / NCIMB 11848 / C-107), this protein is NADH-quinone oxidoreductase subunit D.